We begin with the raw amino-acid sequence, 451 residues long: Tubulin alpha-1/alpha-2 chain (451 aa).

Position 11 (Gln11) interacts with GTP. At Lys40 the chain carries N6-acetyllysine. 6 residues coordinate GTP: Glu71, Gly144, Thr145, Thr179, Asn206, and Asn228. Glu71 is a Mg(2+) binding site. Glu254 is an active-site residue.

The protein belongs to the tubulin family. Dimer of alpha and beta chains. A typical microtubule is a hollow water-filled tube with an outer diameter of 25 nm and an inner diameter of 15 nM. Alpha-beta heterodimers associate head-to-tail to form protofilaments running lengthwise along the microtubule wall with the beta-tubulin subunit facing the microtubule plus end conferring a structural polarity. Microtubules usually have 13 protofilaments but different protofilament numbers can be found in some organisms and specialized cells. Requires Mg(2+) as cofactor. Undergoes a tyrosination/detyrosination cycle, the cyclic removal and re-addition of a C-terminal tyrosine residue by the enzymes tubulin tyrosine carboxypeptidase (TTCP) and tubulin tyrosine ligase (TTL), respectively. In terms of processing, acetylation of alpha chains at Lys-40 stabilizes microtubules and affects affinity and processivity of microtubule motors. This modification has a role in multiple cellular functions, ranging from cell motility, cell cycle progression or cell differentiation to intracellular trafficking and signaling.

It localises to the cytoplasm. The protein localises to the cytoskeleton. It carries out the reaction GTP + H2O = GDP + phosphate + H(+). In terms of biological role, tubulin is the major constituent of microtubules, a cylinder consisting of laterally associated linear protofilaments composed of alpha- and beta-tubulin heterodimers. Microtubules grow by the addition of GTP-tubulin dimers to the microtubule end, where a stabilizing cap forms. Below the cap, tubulin dimers are in GDP-bound state, owing to GTPase activity of alpha-tubulin. The polypeptide is Tubulin alpha-1/alpha-2 chain (TUBA1) (Volvox carteri (Green alga)).